The primary structure comprises 1114 residues: Mediator of RNA polymerase II transcription subunit 14 (1114 aa).

Disordered stretches follow at residues 1–27, 40–79, and 120–141; these read MPGV…QDGL, ANAQ…GPPE, and HGIH…SPGN. The span at 126-140 shows a compositional bias: polar residues; it reads TAPTTGKSPGNQSPG.

The protein belongs to the Mediator complex subunit 14 family. Component of the Mediator complex.

It localises to the nucleus. Its function is as follows. Component of the Mediator complex, a coactivator involved in the regulated transcription of nearly all RNA polymerase II-dependent genes. Mediator functions as a bridge to convey information from gene-specific regulatory proteins to the basal RNA polymerase II transcription machinery. Mediator is recruited to promoters by direct interactions with regulatory proteins and serves as a scaffold for the assembly of a functional preinitiation complex with RNA polymerase II and the general transcription factors. The chain is Mediator of RNA polymerase II transcription subunit 14 (rgr1) from Aspergillus niger (strain ATCC MYA-4892 / CBS 513.88 / FGSC A1513).